We begin with the raw amino-acid sequence, 560 residues long: Probable sulfate transporter MT1781 (560 aa).

11 consecutive transmembrane segments (helical) span residues 29-49 (VLAG…YATV), 51-71 (GLPP…YALL), 79-99 (IGPE…MAAG), 105-125 (AVLA…AGTA), 138-158 (VLVG…LGTI), 184-204 (WPTF…TRWA), 207-227 (APGP…MSLD), 256-276 (ALII…VLTA), 333-353 (LIAL…LAMF), 355-375 (IAAL…LSEF), and 394-414 (AAVL…LSIL). In terms of domain architecture, STAS spans 442–557 (DYPQAKRVPG…MTLPTAVQAF (116 aa)).

It belongs to the SLC26A/SulP transporter (TC 2.A.53) family.

The protein resides in the cell membrane. The polypeptide is Probable sulfate transporter MT1781 (Mycobacterium tuberculosis (strain CDC 1551 / Oshkosh)).